The sequence spans 238 residues: Formate dehydrogenase, cytochrome b556 subunit (238 aa).

His23 and His62 together coordinate heme b. Transmembrane regions (helical) follow at residues 23 to 43, 60 to 80, 120 to 140, and 155 to 175; these read HWMLVICFFMTMFTGVAFFFP, AIHPFTGILMFFAFIYLALLY, MLFWTLNLAMVTLLVTGIIMW, and IAILLHSASAFMLFTGILVHI. The heme b site is built by His160 and His174.

The protein belongs to the formate dehydrogenase gamma subunit family. In terms of assembly, formate dehydrogenase is a membrane-bound complex, formed by subunits alpha, beta and gamma. It depends on heme as a cofactor.

Its subcellular location is the cell membrane. Functionally, allows to use formate as major electron donor during anaerobic respiration. Subunit gamma is probably the cytochrome b556(FDO) component of the formate dehydrogenase. In Haemophilus influenzae (strain ATCC 51907 / DSM 11121 / KW20 / Rd), this protein is Formate dehydrogenase, cytochrome b556 subunit (fdxI).